The following is a 273-amino-acid chain: uncharacterized protein (273 aa).

Residues 1-21 (MKILRWLFALVMLIATTEAMA) form the signal peptide.

The protein to S.typhimurium YadU.

Functionally, part of the yfcOPQRSUV fimbrial operon. Could contribute to adhesion to various surfaces in specific environmental niches. Increases adhesion to eukaryotic T24 bladder epithelial cells in the absence of fim genes. This is an uncharacterized protein from Escherichia coli (strain K12).